A 1036-amino-acid chain; its full sequence is Serine/threonine-protein kinase ULK2 (1036 aa).

In terms of domain architecture, Protein kinase spans 9–271 (YSKRDLVGHG…FEAFFSHPFL (263 aa)). ATP is bound by residues 15–23 (VGHGAFAVV) and Lys39. Asp131 functions as the Proton acceptor in the catalytic mechanism. Disordered stretches follow at residues 319-348 (ENLSSPPLGPPNYLQVSKDSASTSSKNSSC), 418-460 (TSTA…ADTA), 491-522 (CCCGHPQGHDSRSRNSSGSPVPQAQSPQSLLS), 540-588 (QKLR…SSDW), and 656-695 (AEQQSKAVFGRSVSTGKLSDQQGKTPICRHQGSTDSLNTE). Over residues 335–348 (SKDSASTSSKNSSC) the composition is skewed to low complexity. Residues 418–428 (TSTASSGTNVH) show a composition bias toward polar residues. Ser430 carries the post-translational modification Phosphoserine. The segment covering 504–521 (RNSSGSPVPQAQSPQSLL) has biased composition (polar residues). A compositionally biased stretch (polar residues) spans 659-679 (QSKAVFGRSVSTGKLSDQQGK). Phosphoserine occurs at positions 771 and 780. The segment at 812-1036 (ELPEETLMER…SALCHSTATV (225 aa)) is CTD-like region.

It belongs to the protein kinase superfamily. Ser/Thr protein kinase family. APG1/unc-51/ULK1 subfamily. Interacts with SYNGAP1. Component of a complex consisting of ATG13/KIAA0652, ULK1 and RB1CC1/FIP200. Interacts (via C-terminus) with ATG13/KIAA0652. Associates with the mammalian target of rapamycin complex 1 (mTORC1) through an interaction with RPTOR. Post-translationally, autophosphorylated. In response to nutrient limitation, probably phosphorylated and activated by AMPK, leading to activate autophagy.

Its subcellular location is the cytoplasmic vesicle membrane. The enzyme catalyses L-seryl-[protein] + ATP = O-phospho-L-seryl-[protein] + ADP + H(+). It carries out the reaction L-threonyl-[protein] + ATP = O-phospho-L-threonyl-[protein] + ADP + H(+). Its function is as follows. Serine/threonine-protein kinase involved in autophagy in response to starvation. Acts upstream of phosphatidylinositol 3-kinase PIK3C3 to regulate the formation of autophagophores, the precursors of autophagosomes. Part of regulatory feedback loops in autophagy: acts both as a downstream effector and a negative regulator of mammalian target of rapamycin complex 1 (mTORC1) via interaction with RPTOR. Activated via phosphorylation by AMPK, also acts as a negative regulator of AMPK through phosphorylation of the AMPK subunits PRKAA1, PRKAB2 and PRKAG1. May phosphorylate ATG13/KIAA0652, FRS2, FRS3 and RPTOR; however such data need additional evidences. Not involved in ammonia-induced autophagy or in autophagic response of cerebellar granule neurons (CGN) to low potassium concentration. Plays a role early in neuronal differentiation and is required for granule cell axon formation: may govern axon formation via Ras-like GTPase signaling and through regulation of the Rab5-mediated endocytic pathways within developing axons. The chain is Serine/threonine-protein kinase ULK2 (ULK2) from Homo sapiens (Human).